Reading from the N-terminus, the 356-residue chain is sn-glycerol-3-phosphate import ATP-binding protein UgpC (356 aa).

The ABC transporter domain occupies 4-235; it reads LKLQAVTKSW…PASRFVASFI (232 aa). 37–44 lines the ATP pocket; the sequence is GPSGCGKS.

Belongs to the ABC transporter superfamily. sn-glycerol-3-phosphate importer (TC 3.A.1.1.3) family. The complex is composed of two ATP-binding proteins (UgpC), two transmembrane proteins (UgpA and UgpE) and a solute-binding protein (UgpB).

Its subcellular location is the cell inner membrane. It carries out the reaction sn-glycerol 3-phosphate(out) + ATP + H2O = sn-glycerol 3-phosphate(in) + ADP + phosphate + H(+). Part of the ABC transporter complex UgpBAEC involved in sn-glycerol-3-phosphate (G3P) import. Responsible for energy coupling to the transport system. The polypeptide is sn-glycerol-3-phosphate import ATP-binding protein UgpC (Salmonella typhi).